A 1002-amino-acid chain; its full sequence is Calcium-transporting ATPase sarcoplasmic/endoplasmic reticulum type (1002 aa).

Topologically, residues 1-48 are cytoplasmic; it reads MEDGHSKTVEQSLNFFGTDGERGLTLDQIKTNQAKYGPNELPTEEGKS. A helical transmembrane segment spans residues 49-69; the sequence is IWQLVLEQFDDLLVKILLLAA. Topologically, residues 70–89 are lumenal; that stretch reads IISFVLALFEEHEETFTAFV. Residues 90-110 form a helical membrane-spanning segment; the sequence is EPLVILLILIANAVVGVWQER. Residues 111-253 lie on the Cytoplasmic side of the membrane; it reads NAESAIEALK…EIKTPLQQKL (143 aa). The helical transmembrane segment at 254 to 273 threads the bilayer; it reads DEFGEQLSKVISVICVAVWA. At 274–295 the chain is on the lumenal side; the sequence is INIGHFNDPAHGGSWIKGAIYY. The chain crosses the membrane as a helical span at residues 296-313; that stretch reads FKIAVALAVAAIPEGLPA. Ca(2+)-binding residues include Val304, Ala305, Ile307, and Glu309. Topologically, residues 314 to 757 are cytoplasmic; the sequence is VITTCLALGT…EEGRAIYNNM (444 aa). Residue Asp351 is the 4-aspartylphosphate intermediate of the active site. Asp703 and Asp707 together coordinate Mg(2+). Residues 758 to 777 form a helical membrane-spanning segment; that stretch reads KQFIRYLISSNIGEVVSIFL. Residues Asn768 and Glu771 each coordinate Ca(2+). The Lumenal portion of the chain corresponds to 778 to 787; that stretch reads TAALGLPEAL. A helical transmembrane segment spans residues 788 to 808; the sequence is IPVQLLWVNLVTDGLPATALG. Positions 796, 799, and 800 each coordinate Ca(2+). At 809–828 the chain is on the cytoplasmic side; the sequence is FNPPDLDIMDKPPRKADEGL. A helical transmembrane segment spans residues 829–851; that stretch reads ISGWLFFRYMAIGFYVGAATVGA. The Lumenal segment spans residues 852 to 897; it reads AAWWFIASSEGPGLTYWQLTHHLSCLGGGDEFKGVDCKIFSDPKAM. Residues 898-917 traverse the membrane as a helical segment; sequence TMALSVLVTIEMLNAMNSLS. Position 908 (Glu908) interacts with Ca(2+). Residues 918-930 lie on the Cytoplasmic side of the membrane; that stretch reads ENQSLISMPPWCN. The chain crosses the membrane as a helical span at residues 931–949; sequence LWLIGSMALSFTLHFVILY. The Lumenal portion of the chain corresponds to 950–964; that stretch reads VDVLSTVFQVTPLSA. Residues 965–985 form a helical membrane-spanning segment; the sequence is EEWITVMKFSIPVVLLDETLK. The Cytoplasmic segment spans residues 986–1002; that stretch reads FVARKIADVPDAVVDKW.

Belongs to the cation transport ATPase (P-type) (TC 3.A.3) family.

Its subcellular location is the endoplasmic reticulum membrane. It localises to the sarcoplasmic reticulum membrane. It carries out the reaction Ca(2+)(in) + ATP + H2O = Ca(2+)(out) + ADP + phosphate + H(+). This magnesium-dependent enzyme catalyzes the hydrolysis of ATP coupled with the transport of calcium. The sequence is that of Calcium-transporting ATPase sarcoplasmic/endoplasmic reticulum type from Drosophila pseudoobscura pseudoobscura (Fruit fly).